We begin with the raw amino-acid sequence, 259 residues long: Protoheme IX farnesyltransferase (259 aa).

The next 8 helical transmembrane spans lie at leucine 15–leucine 35, alanine 61–proline 81, leucine 83–phenylalanine 103, tryptophan 109–valine 129, proline 137–leucine 157, valine 182–glycine 202, phenylalanine 208–valine 228, and alanine 236–cysteine 256.

It belongs to the UbiA prenyltransferase family. Protoheme IX farnesyltransferase subfamily.

The protein localises to the cell inner membrane. The enzyme catalyses heme b + (2E,6E)-farnesyl diphosphate + H2O = Fe(II)-heme o + diphosphate. It participates in porphyrin-containing compound metabolism; heme O biosynthesis; heme O from protoheme: step 1/1. Its function is as follows. Converts heme B (protoheme IX) to heme O by substitution of the vinyl group on carbon 2 of heme B porphyrin ring with a hydroxyethyl farnesyl side group. In Geotalea uraniireducens (strain Rf4) (Geobacter uraniireducens), this protein is Protoheme IX farnesyltransferase.